The following is a 340-amino-acid chain: Zinc finger protein 367 (340 aa).

Residues 101-140 form a disordered region; that stretch reads GAPQSSASVAAVSGGEDEEEASSPDSGHLKDGIRRGRPRA. Residues 127–140 are compositionally biased toward basic and acidic residues; it reads GHLKDGIRRGRPRA. 2 consecutive C2H2-type zinc fingers follow at residues 157–179 and 185–209; these read IRCNICNRVFPREKSLQAHKRTH and YLCDYPDCGKAFVQSGQLKTHQRLH. The interval 280 to 317 is disordered; the sequence is KGKLVQKADQEQQDPLEYLQSDEEDDEKSGAQRRLQEQ. Positions 299–332 form a coiled coil; that stretch reads QSDEEDDEKSGAQRRLQEQRERLHGALALIELAN. Phosphoserine is present on Ser300. Residues 307 to 317 show a composition bias toward basic and acidic residues; sequence KSGAQRRLQEQ.

It belongs to the krueppel C2H2-type zinc-finger protein family. In terms of tissue distribution, expressed in bone marrow and ovary.

The protein localises to the nucleus. Functionally, transcriptional activator. Isoform 1 may be involved in transcriptional activation of erythroid genes. This chain is Zinc finger protein 367 (Znf367), found in Mus musculus (Mouse).